The following is a 65-amino-acid chain: Conotoxin mr5.1b (65 aa).

A signal peptide spans 1–19 (MRCVPVFVILLLLIASAPS). A propeptide spanning residues 20–48 (VDARLKTKDDMPLPSSHANIKRTLQMLRN) is cleaved from the precursor. 4-carboxyglutamate is present on E60.

It belongs to the conotoxin T superfamily. In terms of processing, contains 2 disulfide bonds that can be either 'C1-C3, C2-C4' or 'C1-C4, C2-C3', since these disulfide connectivities have been observed for conotoxins with cysteine framework V (for examples, see AC P0DQQ7 and AC P81755). Expressed by the venom duct.

The protein resides in the secreted. In Conus marmoreus (Marble cone), this protein is Conotoxin mr5.1b.